The primary structure comprises 347 residues: Protein-glutamate methylesterase/protein-glutamine glutaminase (347 aa).

One can recognise a Response regulatory domain in the interval 6–123 (RVLVVDDSPT…HRPFGDLAEK (118 aa)). Aspartate 57 carries the 4-aspartylphosphate modification. A CheB-type methylesterase domain is found at 150–342 (FRVGRKIVAI…EEILKLTAAR (193 aa)). Residues serine 162, histidine 188, and aspartate 284 contribute to the active site.

This sequence belongs to the CheB family. In terms of processing, phosphorylated by CheA. Phosphorylation of the N-terminal regulatory domain activates the methylesterase activity.

The protein localises to the cytoplasm. The catalysed reaction is [protein]-L-glutamate 5-O-methyl ester + H2O = L-glutamyl-[protein] + methanol + H(+). It carries out the reaction L-glutaminyl-[protein] + H2O = L-glutamyl-[protein] + NH4(+). Its function is as follows. Involved in chemotaxis. Part of a chemotaxis signal transduction system that modulates chemotaxis in response to various stimuli. Catalyzes the demethylation of specific methylglutamate residues introduced into the chemoreceptors (methyl-accepting chemotaxis proteins or MCP) by CheR. Also mediates the irreversible deamidation of specific glutamine residues to glutamic acid. The sequence is that of Protein-glutamate methylesterase/protein-glutamine glutaminase from Rhizobium etli (strain ATCC 51251 / DSM 11541 / JCM 21823 / NBRC 15573 / CFN 42).